The sequence spans 274 residues: NAD(P)H dehydrogenase [quinone] 1 (274 aa).

Residues histidine 12, 18-19 (FN), and glutamine 67 contribute to the FAD site. Serine 82 bears the Phosphoserine mark. Residue 104–107 (LQWF) participates in FAD binding. 126 to 128 (AYT) contacts substrate. FAD contacts are provided by residues 148–151 (TTGG), tyrosine 156, and arginine 201. An important for apoenzyme conformational stability region spans residues 225 to 274 (PSSLFDLNFQAGFLMKKEVQDEEKNKKFGLSVGHHLGKSIPTDNQIKARK). Glycyl lysine isopeptide (Lys-Gly) (interchain with G-Cter in SUMO2) cross-links involve residues lysine 250 and lysine 251.

Belongs to the NAD(P)H dehydrogenase (quinone) family. As to quaternary structure, homodimer. Interacts with PDLIM4 isoform 2; this interaction stabilizes PDLIM4 isoform 2 in response to oxidative stress and protects it from ubiquitin-independent degradation by the core 20S proteasome. Interacts with TP73 (via SAM domain); this interaction is NADH-dependent, stabilizes TP73 in response to oxidative stress and protects it from ubiquitin-independent degradation by the 20S proteasome. Interacts with TP53; this interaction is NADH-dependent, stabilizes TP53 in response to oxidative stress and protects it from ubiquitin-independent degradation by the 20S proteasome. It depends on FAD as a cofactor.

It is found in the cytoplasm. It localises to the cytosol. The catalysed reaction is a quinone + NADH + H(+) = a quinol + NAD(+). It catalyses the reaction a quinone + NADPH + H(+) = a quinol + NADP(+). It carries out the reaction ubiquinone-10 + NADH + H(+) = ubiquinol-10 + NAD(+). The enzyme catalyses menadione + NADH + H(+) = menadiol + NAD(+). With respect to regulation, inhibited by dicoumarol. Functionally, flavin-containing quinone reductase that catalyzes two-electron reduction of quinones to hydroquinones using either NADH or NADPH as electron donors. In a ping-pong kinetic mechanism, the electrons are sequentially transferred from NAD(P)H to flavin cofactor and then from reduced flavin to the quinone, bypassing the formation of semiquinone and reactive oxygen species. Regulates cellular redox state primarily through quinone detoxification. Reduces components of plasma membrane redox system such as coenzyme Q and vitamin quinones, producing antioxidant hydroquinone forms. In the process may function as superoxide scavenger to prevent hydroquinone oxidation and facilitate excretion. Alternatively, can activate quinones and their derivatives by generating redox reactive hydroquinones with DNA cross-linking antitumor potential. Acts as a gatekeeper of the core 20S proteasome known to degrade proteins with unstructured regions. Upon oxidative stress, interacts with tumor suppressors TP53 and TP73 in a NADH-dependent way and inhibits their ubiquitin-independent degradation by the 20S proteasome. The protein is NAD(P)H dehydrogenase [quinone] 1 of Homo sapiens (Human).